A 525-amino-acid polypeptide reads, in one-letter code: Transcriptional regulatory protein TOD6 (525 aa).

The tract at residues 22-82 (GFSILSKHPH…NNPSSWDPSD (61 aa)) is disordered. Residues 35–47 (LVHSHSLSHTNAK) show a composition bias toward polar residues. Positions 61-71 (STNKEEAESLK) are enriched in basic and acidic residues. One can recognise an HTH myb-type domain in the interval 67-124 (AESLKKNNPSSWDPSDDIKLRHLKEIKNLGWKEIAHHFPNRTPNACQFRWRRLKSGNL). The H-T-H motif DNA-binding region spans 97-120 (WKEIAHHFPNRTPNACQFRWRRLK). Ser-280 is modified (phosphoserine). Residues 283–308 (PSTQIPHSTTKTRKNSHSVISSRRSS) are disordered. Residues 299 to 308 (HSVISSRRSS) are compositionally biased toward low complexity. Residues Ser-333, Ser-341, and Ser-366 each carry the phosphoserine modification. Residues 451–510 (TNEGCKDEEEEDDIDPLHKENGINTPSQQSQNYGMLEAKHDNPKSSELSSMTSANDIRNE) are disordered. Polar residues-rich tracts occupy residues 472-483 (GINTPSQQSQNY) and 495-506 (SSELSSMTSAND).

It belongs to the DOT6 family. Component of the RPD3C(L) complex composed of at least ASH1, CTI6, DEP1, DOT6, PHO23, RPD3, RXT2, RXT3, SAP30, SDS3, SIN3, TOD6; UME1 and UME6.

It is found in the cytoplasm. The protein localises to the nucleus. Component of the RPD3 histone deacetylase complex RPD3C(L) responsible for the deacetylation of lysine residues on the N-terminal part of the core histones (H2A, H2B, H3 and H4). Histone deacetylation gives a tag for epigenetic repression and plays an important role in transcriptional regulation, cell cycle progression and developmental events. TOD6 binds to sequences containing the core CGATG, which resembles the PAC (Polymerase A and C) motif. This Saccharomyces cerevisiae (strain ATCC 204508 / S288c) (Baker's yeast) protein is Transcriptional regulatory protein TOD6 (TOD6).